The chain runs to 38 residues: Mating hormone A-factor 2 (38 aa).

Residues 1 to 12 are compositionally biased toward polar residues; that stretch reads MQPITTASTQAT. A disordered region spans residues 1-20; the sequence is MQPITTASTQATQKDKSSEK. Residues 1 to 23 constitute a propeptide that is removed on maturation; that stretch reads MQPITTASTQATQKDKSSEKKDN. C35 bears the Cysteine methyl ester mark. C35 is lipidated: S-farnesyl cysteine. A propeptide spans 36-38 (removed in mature form); the sequence is VIA.

It localises to the cell membrane. Functionally, the active factor is excreted into the culture medium by haploid cells of the A mating type and acts on cells of the opposite mating type (type alpha). It mediates the conjugation process between the two types by inhibiting the initiation of DNA synthesis in type alpha cells and synchronizing them with type A. This chain is Mating hormone A-factor 2 (MFA2), found in Saccharomyces cerevisiae (strain ATCC 204508 / S288c) (Baker's yeast).